Reading from the N-terminus, the 321-residue chain is 4-hydroxy-2-oxoglutarate aldolase, mitochondrial (321 aa).

The N-terminal 23 residues, 1 to 23 (MLGPQIWASMRQGLSRGLSRNVK), are a transit peptide targeting the mitochondrion. 71–72 (ST) contributes to the substrate binding site. Lys-190 serves as the catalytic Schiff-base intermediate with substrate. Substrate is bound by residues Ser-192 and Gly-216.

The protein belongs to the DapA family. In terms of assembly, homotetramer.

It is found in the mitochondrion. It catalyses the reaction (4S)-4-hydroxy-2-oxoglutarate = glyoxylate + pyruvate. It carries out the reaction (4R)-4-hydroxy-2-oxoglutarate = glyoxylate + pyruvate. Its activity is regulated as follows. Inhibited by divalent cations. Catalyzes the final step in the metabolic pathway of hydroxyproline. The sequence is that of 4-hydroxy-2-oxoglutarate aldolase, mitochondrial (Hoga1) from Mus musculus (Mouse).